Reading from the N-terminus, the 535-residue chain is Inositol 1,4,5-trisphosphate receptor-interacting protein-like 2 (535 aa).

Residues 1–38 form the signal peptide; the sequence is MSVHYTLNLRVFWPLVTGLCTALVCLYHVLRGSGGARA. Over 39-43 the chain is Extracellular; the sequence is EPADG. The chain crosses the membrane as a helical span at residues 44–64; it reads VDGGFPLLKVAVLLLLSYVLL. Topologically, residues 65 to 535 are cytoplasmic; it reads RCRHAVRQRF…RTQGFLEGEP (471 aa). Ser139 is modified (phosphoserine).

Belongs to the ITPRIP family.

The protein resides in the membrane. In Homo sapiens (Human), this protein is Inositol 1,4,5-trisphosphate receptor-interacting protein-like 2 (ITPRIPL2).